The following is a 713-amino-acid chain: RNA-binding protein vts1 (713 aa).

Low complexity predominate over residues 154–188; that stretch reads NSGLSLDKSLPSSPKGDSPSLSSSLPSLTTKSNLS. 5 disordered regions span residues 154–208, 254–336, 356–389, 554–596, and 667–713; these read NSGL…SSKH, EPPA…RDRG, DESS…SRPL, EKIE…GNEL, and KAAK…SSMD. 2 stretches are compositionally biased toward polar residues: residues 189–208 and 258–281; these read GNLN…SSKH and SSAS…NANV. Low complexity-rich tracts occupy residues 282–297 and 304–320; these read TSSL…SKTT and SKKS…PNTS. The span at 321 to 330 shows a compositional bias: polar residues; that stretch reads FFETPHNNIW. Positions 369–378 are enriched in pro residues; it reads SPPPPPPPPE. The segment covering 559 to 569 has biased composition (polar residues); that stretch reads PPNNSKNQTYR. A compositionally biased stretch (basic residues) spans 570–583; it reads RSSRGSNKTRKSIS. Residues 595 to 656 enclose the SAM domain; the sequence is ELPQDIPSWL…LKSFQEVAPL (62 aa). Positions 670 to 681 are enriched in polar residues; the sequence is KNQSSESLTSFK. At S673 the chain carries Phosphoserine. Residues 691 to 702 show a composition bias toward low complexity; the sequence is SGSMSNEISSNS. The span at 703–713 shows a compositional bias: polar residues; that stretch reads TKQDVSSSSMD.

The protein belongs to the VTS1 family. Monomer. Binds to RNA.

The protein resides in the cytoplasm. The protein localises to the cytosol. It localises to the P-body. RNA-binding protein involved in post-transcriptional regulation through transcript degradation. This chain is RNA-binding protein vts1, found in Schizosaccharomyces pombe (strain 972 / ATCC 24843) (Fission yeast).